An 802-amino-acid polypeptide reads, in one-letter code: Endoplasmin (802 aa).

Residues 1-21 (MRVLWVLGLCCVLLTFGFVRA) form the signal peptide. Positions 42–44 (SRT) match the SRT pseudosubstrate motif motif. Asn-62 carries N-linked (GlcNAc...) asparagine glycosylation. Ser-64 carries the phosphoserine modification. N-linked (GlcNAc...) asparagine glycosylation is present at Asn-107. Residues Asn-107, Asp-149, and Asn-162 each contribute to the ATP site. Lys-168 bears the N6-(2-hydroxyisobutyryl)lysine mark. Ser-172 bears the Phosphoserine mark. Phe-199 provides a ligand contact to ATP. Asn-217 is a glycosylation site (N-linked (GlcNAc...) asparagine). The span at 290–317 (EEPLEEDEAAKEEKEESDDEAAVEEEEE) shows a compositional bias: acidic residues. A disordered region spans residues 290 to 323 (EEPLEEDEAAKEEKEESDDEAAVEEEEEEKKPKT). A phosphoserine mark is found at Ser-306 and Ser-403. Position 404 is an N6-succinyllysine (Lys-404). Asn-445 carries an N-linked (GlcNAc...) asparagine glycan. At Ser-447 the chain carries Phosphoserine. Lys-479 is modified (N6-acetyllysine). N-linked (GlcNAc...) asparagine glycans are attached at residues Asn-481 and Asn-502. Residue Lys-633 is modified to N6-succinyllysine. The interval 749–802 (IDPEAQVEEEPEEEPEDTSEDAEDSEQDEGEEMDAGTEEEEEETEKESTEKDEL) is disordered. The span at 753-793 (AQVEEEPEEEPEDTSEDAEDSEQDEGEEMDAGTEEEEEETE) shows a compositional bias: acidic residues. Position 785 is a phosphothreonine (Thr-785). Residues 799-802 (KDEL) carry the Prevents secretion from ER motif.

It belongs to the heat shock protein 90 family. In terms of assembly, homodimer; disulfide-linked. Component of an EIF2 complex at least composed of CELF1/CUGBP1, CALR, CALR3, EIF2S1, EIF2S2, HSP90B1 and HSPA5. Part of a large chaperone multiprotein complex comprising DNAJB11, HSP90B1, HSPA5, HYOU, PDIA2, PDIA4, PDIA6, PPIB, SDF2L1, UGGT1 and very small amounts of ERP29, but not, or at very low levels, CALR nor CANX. Hyperglycosylated form interacts with OS9; promoting its degradation by the endoplasmic reticulum associated degradation (ERAD). Interacts with AIMP1; regulates its retention in the endoplasmic reticulum. Interacts with CNPY3; this interaction is disrupted in the presence of ATP. Interacts with TLR4, TLR9 and TLR11, but not with TLR3. Interacts with MZB1 in a calcium-dependent manner. Interacts with METTL23. Interacts with IL1B; the interaction facilitates cargo translocation into the ERGIC. Interacts with EIF2AK3. Post-translationally, phosphorylated by CK2. In terms of processing, N-glycosylated cotranslationally at Asn-217 by STT3A-containing OST-A complex: this glycosylation is constitutive. In response to various stress, 5 additional facultative sites (Asn-62, Asn-107, Asn-445, Asn-481 and Asn-502) can be glycosylated post-translationally by STT3B-containing OST-B complex, leading to a hyperglycosylated form that is degraded by the ER-associated degradation (ERAD) pathway. In normal conditions, the OST-A complex together with CCDC134 prevent glycosylation at facultative sites during protein folding, thereby preventing hyperglycosylation. Mechanistically, nascent HSP90B1 is tethered during translation to a specialized CCDC134-containing translocon that forms a microenvironment for its folding, in which STT3A associates with the SRT pseudosubstrate motif, and prevents access to facultative glycosylation sites until folding is completed, rendering its facultative sites inaccessible to the OST-B complex.

It is found in the endoplasmic reticulum lumen. Its subcellular location is the sarcoplasmic reticulum lumen. The protein localises to the melanosome. The catalysed reaction is ATP + H2O = ADP + phosphate + H(+). Functionally, ATP-dependent chaperone involved in the processing of proteins in the endoplasmic reticulum, regulating their transport. Together with MESD, acts as a modulator of the Wnt pathway by promoting the folding of LRP6, a coreceptor of the canonical Wnt pathway. When associated with CNPY3, required for proper folding of Toll-like receptors. Promotes folding and trafficking of TLR4 to the cell surface. May participate in the unfolding of cytosolic leaderless cargos (lacking the secretion signal sequence) such as the interleukin 1/IL-1 to facilitate their translocation into the ERGIC (endoplasmic reticulum-Golgi intermediate compartment) and secretion; the translocation process is mediated by the cargo receptor TMED10. The chain is Endoplasmin (Hsp90b1) from Mus musculus (Mouse).